Consider the following 140-residue polypeptide: ATP synthase epsilon chain (140 aa).

This sequence belongs to the ATPase epsilon chain family. F-type ATPases have 2 components, CF(1) - the catalytic core - and CF(0) - the membrane proton channel. CF(1) has five subunits: alpha(3), beta(3), gamma(1), delta(1), epsilon(1). CF(0) has three main subunits: a, b and c.

It is found in the cell inner membrane. In terms of biological role, produces ATP from ADP in the presence of a proton gradient across the membrane. The sequence is that of ATP synthase epsilon chain from Vibrio vulnificus (strain CMCP6).